The chain runs to 551 residues: Arginine--tRNA ligase (551 aa).

A 'HIGH' region motif is present at residues 123 to 133 (ANPTGPLTIGR).

Belongs to the class-I aminoacyl-tRNA synthetase family. In terms of assembly, monomer.

Its subcellular location is the cytoplasm. The enzyme catalyses tRNA(Arg) + L-arginine + ATP = L-arginyl-tRNA(Arg) + AMP + diphosphate. This is Arginine--tRNA ligase from Prosthecochloris aestuarii (strain DSM 271 / SK 413).